Reading from the N-terminus, the 307-residue chain is MLFNLLVILGPTASGKTRLGVELARRFFGEVLSADSRQVYRGMDIGTGKDLSEYGEVPYHLIDIVDPGYEFNVFEFQRRFEQAYNHITERGKLPVMVGGTGMYLESVLKGYRLVEVPENAQLRRQLAGFSHEALMERLGNANPRLHNSTDLLDHHRLVRAIEIAEYEAPPQAPFLPGLSPLIFGIQWDRPILRQRITERLKLRLDQGMIQEVERLHDTGIPFETLEFYGLEYRFIARHLKGELSRNDMFQKLNSAIHDFAKRQCTWFSRMERHGTVIHWLDGAADPLAEALGILSHQKTQSTPFCRP.

An ATP-binding site is contributed by 10-17 (GPTASGKT). 12-17 (TASGKT) serves as a coordination point for substrate. An interaction with substrate tRNA region spans residues 35 to 38 (DSRQ).

It belongs to the IPP transferase family. In terms of assembly, monomer. The cofactor is Mg(2+).

It carries out the reaction adenosine(37) in tRNA + dimethylallyl diphosphate = N(6)-dimethylallyladenosine(37) in tRNA + diphosphate. Its function is as follows. Catalyzes the transfer of a dimethylallyl group onto the adenine at position 37 in tRNAs that read codons beginning with uridine, leading to the formation of N6-(dimethylallyl)adenosine (i(6)A). The chain is tRNA dimethylallyltransferase 1 from Geotalea daltonii (strain DSM 22248 / JCM 15807 / FRC-32) (Geobacter daltonii).